A 675-amino-acid polypeptide reads, in one-letter code: Zeaxanthin epoxidase, chloroplastic (675 aa).

The N-terminal 25 residues, 1-25 (MASTVLYNSLTTSTTVFLRSHLPIS), are a transit peptide targeting the chloroplast. Residues 92–120 (RILVAGGGIGGLVFALAAKKRGFDVKVFE) and 370–383 (KLTWGQGRVTLLGD) contribute to the FAD site. Positions 558 to 622 (ICLSRKEDEP…HGTWITDNEG (65 aa)) constitute an FHA domain.

It depends on FAD as a cofactor.

The protein resides in the plastid. The protein localises to the chloroplast thylakoid membrane. The enzyme catalyses all-trans-zeaxanthin + 4 reduced [2Fe-2S]-[ferredoxin] + 2 O2 + 4 H(+) = all-trans-violaxanthin + 4 oxidized [2Fe-2S]-[ferredoxin] + 2 H2O. It functions in the pathway plant hormone biosynthesis; abscisate biosynthesis. Inhibited by diphenyleneiodonium (DPI). In terms of biological role, converts zeaxanthin into antheraxanthin and subsequently violaxanthin. Involved in the epoxidation of zeaxanthin. The sequence is that of Zeaxanthin epoxidase, chloroplastic from Spinacia oleracea (Spinach).